We begin with the raw amino-acid sequence, 494 residues long: 3-octaprenyl-4-hydroxybenzoate carboxy-lyase (494 aa).

Asn172 contacts Mn(2+). Prenylated FMN is bound by residues 175–177, 189–191, and 194–195; these read IYR, RWL, and RG. Residue Glu238 coordinates Mn(2+). Residue Asp287 is the Proton donor of the active site.

This sequence belongs to the UbiD family. As to quaternary structure, homohexamer. The cofactor is prenylated FMN. Mn(2+) serves as cofactor.

The protein resides in the cell membrane. It catalyses the reaction a 4-hydroxy-3-(all-trans-polyprenyl)benzoate + H(+) = a 2-(all-trans-polyprenyl)phenol + CO2. The protein operates within cofactor biosynthesis; ubiquinone biosynthesis. Functionally, catalyzes the decarboxylation of 3-octaprenyl-4-hydroxy benzoate to 2-octaprenylphenol, an intermediate step in ubiquinone biosynthesis. The polypeptide is 3-octaprenyl-4-hydroxybenzoate carboxy-lyase (Shigella flexneri serotype 5b (strain 8401)).